Consider the following 77-residue polypeptide: MARVCDVTGKKPMVGNNVSHANNKTRRRFLPNLQYRRFWVETENRWVRLRVSSAALRLIDKNGIDAVLADLRARGQA.

It belongs to the bacterial ribosomal protein bL28 family.

This Verminephrobacter eiseniae (strain EF01-2) protein is Large ribosomal subunit protein bL28.